The chain runs to 97 residues: ESAT-6-like protein EsxG (97 aa).

The protein belongs to the WXG100 family. CFP-10 subfamily. As to quaternary structure, forms a tight 1:1 complex with EsxH.

It is found in the secreted. This Mycolicibacterium smegmatis (strain ATCC 700084 / mc(2)155) (Mycobacterium smegmatis) protein is ESAT-6-like protein EsxG.